The chain runs to 161 residues: Small ribosomal subunit protein uS9 (161 aa).

Belongs to the universal ribosomal protein uS9 family.

The protein is Small ribosomal subunit protein uS9 of Rickettsia canadensis (strain McKiel).